The following is a 657-amino-acid chain: Glycogen debranching enzyme (657 aa).

Residue D336 is the Nucleophile of the active site. Catalysis depends on E371, which acts as the Proton donor. A compositionally biased stretch (basic and acidic residues) spans 458-467 (NEANGEENRD). Residues 458 to 479 (NEANGEENRDGTNNNYSNNHGK) are disordered.

Belongs to the glycosyl hydrolase 13 family.

The catalysed reaction is Hydrolysis of (1-&gt;6)-alpha-D-glucosidic linkages to branches with degrees of polymerization of three or four glucose residues in limit dextrin.. Its pathway is glycan degradation; glycogen degradation. Its function is as follows. Removes maltotriose and maltotetraose chains that are attached by 1,6-alpha-linkage to the limit dextrin main chain, generating a debranched limit dextrin. This Escherichia coli O8 (strain IAI1) protein is Glycogen debranching enzyme.